The primary structure comprises 344 residues: MTIEEALLGLLDGQTLISSEMESIMSEIMDGQISPIKIAAFLVLLRQRGEEVEEIYGAARAILNHAEQPILEGDPIDTCGTGGDGANTFNISTAASLIAHACGVKVAKHGNRSISSRCGSADVLEAMGFKIDLPKKETEELFKETGFVFLFAPIFHKAMKNVAPVRKELGLRTIFNMLGPLINPARTQRQIIGVYSKDLTGMFAQVLRQFDAKHCLILHGQTDEGGILDEPSVCGPTYISELQHGTVRTYTVHPEDFGLRRHSISQLKGGDARENAQIIWQILDKNGPEAREDAVVFTAGMACYVAELTPSIKEGIDKARQAIHSGAAKQSVERLLEKHRNLVI.

5-phospho-alpha-D-ribose 1-diphosphate contacts are provided by residues G80, 83-84 (GD), T88, 90-93 (NIST), 108-116 (KHGNRSISS), and S120. An anthranilate-binding site is contributed by G80. S92 is a binding site for Mg(2+). N111 is an anthranilate binding site. R166 provides a ligand contact to anthranilate. Positions 229 and 230 each coordinate Mg(2+).

The protein belongs to the anthranilate phosphoribosyltransferase family. Homodimer. It depends on Mg(2+) as a cofactor.

The enzyme catalyses N-(5-phospho-beta-D-ribosyl)anthranilate + diphosphate = 5-phospho-alpha-D-ribose 1-diphosphate + anthranilate. Its pathway is amino-acid biosynthesis; L-tryptophan biosynthesis; L-tryptophan from chorismate: step 2/5. In terms of biological role, catalyzes the transfer of the phosphoribosyl group of 5-phosphorylribose-1-pyrophosphate (PRPP) to anthranilate to yield N-(5'-phosphoribosyl)-anthranilate (PRA). The chain is Anthranilate phosphoribosyltransferase from Chloroherpeton thalassium (strain ATCC 35110 / GB-78).